Reading from the N-terminus, the 229-residue chain is Potassium/proton antiporter CemA (229 aa).

Helical transmembrane passes span leucine 7 to phenylalanine 27, isoleucine 114 to leucine 134, isoleucine 154 to isoleucine 174, and isoleucine 189 to isoleucine 209.

This sequence belongs to the CemA family.

Its subcellular location is the plastid. It is found in the chloroplast inner membrane. It catalyses the reaction K(+)(in) + H(+)(out) = K(+)(out) + H(+)(in). Its function is as follows. Contributes to K(+)/H(+) antiport activity by supporting proton efflux to control proton extrusion and homeostasis in chloroplasts in a light-dependent manner to modulate photosynthesis. Prevents excessive induction of non-photochemical quenching (NPQ) under continuous-light conditions. Indirectly promotes efficient inorganic carbon uptake into chloroplasts. This is Potassium/proton antiporter CemA from Fagus sylvatica (Beechnut).